The chain runs to 175 residues: Probable coatomer subunit zeta-A (175 aa).

Belongs to the adaptor complexes small subunit family. As to quaternary structure, oligomeric complex that consists of at least the alpha, beta, beta', gamma, delta, epsilon and zeta subunits.

It localises to the cytoplasm. It is found in the golgi apparatus membrane. The protein resides in the cytoplasmic vesicle. The protein localises to the COPI-coated vesicle membrane. The coatomer is a cytosolic protein complex that binds to dilysine motifs and reversibly associates with Golgi non-clathrin-coated vesicles, which further mediate biosynthetic protein transport from the ER, via the Golgi up to the trans Golgi network. Coatomer complex is required for budding from Golgi membranes, and is essential for the retrograde Golgi-to-ER transport of dilysine-tagged proteins. The zeta subunit may be involved in regulating the coat assembly and, hence, the rate of biosynthetic protein transport due to its association-dissociation properties with the coatomer complex. This chain is Probable coatomer subunit zeta-A (copZa), found in Dictyostelium discoideum (Social amoeba).